The following is a 1040-amino-acid chain: MQVLPPGSTGGPSRLFILRPVATTLLMAAILLAGIIGYRFLPVAALPEVDYPTIQVVTLYPGASPDVMTSSVTAPLERQFGQMSGLKQMSSQSSGGASVVTLQFQLTLPLDVAEQEVQAAINAATNLLPSDLPNPPIYSKVNPADPPIMTLAVTSNAMPMTQVEDMVETRVAQKISQVSGVGLVTLAGGQRPAIRVKLNAQAIAALGLTSETVRTAITGANVNSAKGSLDGPERAVTLSANDQMQSADEYRKLIIAYQNGAPVRLGDVATVEQGAENSWLGAWANQAPAIVMNVQRQPGANIIATADSIRQMLPQLTESLPKSVKVTVLSDRTTNIRASVRDTQFELMLAIALVVMIIYLFLRNIPATIIPGVAVPLSLIGTFAVMVFLDFSINNLTLMALTIATGFVVDDAIVVIENISRYIEKGEKPLAAALKGAGEIGFTIISLTFSLIAVLIPLLFMGDIVGRLFREFAVTLAVAILISAVVSLTLTPMMCACMLSQQSLRKQNRFSRACERMFDRVIASYGRGLAKVLNHPWLTLSVAFATLLLSVMLWIVIPKGFFPVQDNGIIQGTLQAPQSSSYASMAQRQRQVAERILQDPAVQSLTTFVGVDGANPTLNSARLQINLKPLDARDDRVQQVISRLQTAVATIPVVALYLQPTQDLTIDTQVSRTQYQFTLQATTLDALSHWVPKLQNALQSLPQLSEVSSDWQDRGLAAWVNVDRDSASRLGISIADVDNALYNAFGQRLISTIYTQANQYRVVLEHNTASTPGLAALETIRLTSRDGGTVSLSAIARIEQRFAPLSINHLDQFPVTTFSFNVPEGYSLGDAVQAILDTEKTLALPADITTQFQGSTLAFQAALGSTVWLIVAAVVAMYIVLGVLYESFIHPITILSTLPTAGVGALLALIIAGSELDIIAIIGIILLIGIVKKNAIMMIDFALAAEREQGMSPRDAIFQACLLRFRPILMTTLAALLGALPLMLSTGVGAELRRPLGIAMVGGLLVSQVLTLFTTPVIYLLFDRLSLYVKSRFPRHKEEA.

Transmembrane regions (helical) follow at residues 25–45 (LLMAAILLAGIIGYRFLPVAA), 347–367 (LMLAIALVVMIIYLFLRNIPA), 369–389 (IIPGVAVPLSLIGTFAVMVFL), 396–416 (LTLMALTIATGFVVDDAIVVI), 440–460 (IGFTIISLTFSLIAVLIPLLF), 472–492 (FAVTLAVAILISAVVSLTLTP), 537–557 (WLTLSVAFATLLLSVMLWIVI), 863–883 (LGSTVWLIVAAVVAMYIVLGV), 888–908 (FIHPITILSTLPTAGVGALLA), 910–930 (IIAGSELDIIAIIGIILLIGI), 968–988 (ILMTTLAALLGALPLMLSTGV), and 998–1018 (IAMVGGLLVSQVLTLFTTPVI).

This sequence belongs to the resistance-nodulation-cell division (RND) (TC 2.A.6) family. MdtB subfamily. In terms of assembly, part of a tripartite efflux system composed of MdtA, MdtB and MdtC. MdtB forms a heteromultimer with MdtC.

It localises to the cell inner membrane. The polypeptide is Multidrug resistance protein MdtB (Salmonella paratyphi A (strain ATCC 9150 / SARB42)).